The chain runs to 206 residues: Protein GET1 (206 aa).

Topologically, residues 1–4 (MPSL) are lumenal. A helical transmembrane segment spans residues 5-24 (LITILLLNIVIYVINTIGAA). At 25–110 (TIDSLLWLFY…SFDMTVKSVR (86 aa)) the chain is on the cytoplasmic side. Residues 42 to 99 (SHMAREQRRLKREVIQLKREMNATSSQDEFAKWAKLRRRHDKALETYEAKNNELTQCK) are a coiled coil. The helical transmembrane segment at 111 to 131 (WAATSGLMLFLQFWYSKRPIF) threads the bilayer. Residues 132–155 (TLPPGWIPWQVQWVLSFPRAPMGT) lie on the Lumenal side of the membrane. The chain crosses the membrane as a helical span at residues 156–172 (VSIQIWGGACATVVALV). Residues 173 to 206 (GDAVGATMGFVSASKKEGMKVGAGVGEKEGKKSQ) are Cytoplasmic-facing.

The protein belongs to the WRB/GET1 family. Interacts with GET3.

It localises to the endoplasmic reticulum membrane. Required for the post-translational delivery of tail-anchored (TA) proteins to the endoplasmic reticulum. Acts as a membrane receptor for soluble GET3, which recognizes and selectively binds the transmembrane domain of TA proteins in the cytosol. In Ajellomyces dermatitidis (strain ER-3 / ATCC MYA-2586) (Blastomyces dermatitidis), this protein is Protein GET1.